The primary structure comprises 511 residues: ATP synthase subunit alpha 1 (511 aa).

ATP is bound at residue 174-181; sequence GDRQTGKT.

Belongs to the ATPase alpha/beta chains family. F-type ATPases have 2 components, CF(1) - the catalytic core - and CF(0) - the membrane proton channel. CF(1) has five subunits: alpha(3), beta(3), gamma(1), delta(1), epsilon(1). CF(0) has four main subunits: a(1), b(1), b'(1) and c(9-12).

Its subcellular location is the cell inner membrane. It carries out the reaction ATP + H2O + 4 H(+)(in) = ADP + phosphate + 5 H(+)(out). Functionally, produces ATP from ADP in the presence of a proton gradient across the membrane. The alpha chain is a regulatory subunit. In Chlorobium luteolum (strain DSM 273 / BCRC 81028 / 2530) (Pelodictyon luteolum), this protein is ATP synthase subunit alpha 1.